The following is a 155-amino-acid chain: Cytochrome c oxidase subunit 4, mitochondrial (155 aa).

Residues 1-25 (MLSLRQSIRFFKPATRTLCSSRYLL) constitute a mitochondrion transit peptide. T55 bears the Phosphothreonine mark. C111, H119, C134, and C137 together coordinate Zn(2+).

Belongs to the cytochrome c oxidase subunit 5B family. Component of the cytochrome c oxidase (complex IV, CIV), a multisubunit enzyme composed of 12 subunits. The complex is composed of a catalytic core of 3 subunits COX1, COX2 and COX3, encoded in the mitochondrial DNA, and 9 supernumerary subunits COX4, COX5A (or COX5B), COX6, COX7, COX8, COX9, COX12, COX13 and COX26, which are encoded in the nuclear genome. The complex exists as a monomer or a dimer and forms supercomplexes (SCs) in the inner mitochondrial membrane with a dimer of ubiquinol-cytochrome c oxidoreductase (cytochrome b-c1 complex, complex III, CIII), resulting in 2 different assemblies (supercomplexes III(2)IV and III(2)IV(2)).

Its subcellular location is the mitochondrion inner membrane. It functions in the pathway energy metabolism; oxidative phosphorylation. Its function is as follows. Component of the cytochrome c oxidase, the last enzyme in the mitochondrial electron transport chain which drives oxidative phosphorylation. The respiratory chain contains 3 multisubunit complexes succinate dehydrogenase (complex II, CII), ubiquinol-cytochrome c oxidoreductase (cytochrome b-c1 complex, complex III, CIII) and cytochrome c oxidase (complex IV, CIV), that cooperate to transfer electrons derived from NADH and succinate to molecular oxygen, creating an electrochemical gradient over the inner membrane that drives transmembrane transport and the ATP synthase. Cytochrome c oxidase is the component of the respiratory chain that catalyzes the reduction of oxygen to water. Electrons originating from reduced cytochrome c in the intermembrane space (IMS) are transferred via the dinuclear copper A center (CU(A)) of COX2 and heme A of COX1 to the active site in COX1, a binuclear center (BNC) formed by heme A3 and copper B (CU(B)). The BNC reduces molecular oxygen to 2 water molecules using 4 electrons from cytochrome c in the IMS and 4 protons from the mitochondrial matrix. The polypeptide is Cytochrome c oxidase subunit 4, mitochondrial (COX4) (Saccharomyces cerevisiae (strain ATCC 204508 / S288c) (Baker's yeast)).